The primary structure comprises 125 residues: Acidic phospholipase A2 5 (125 aa).

Residue S1 is a signal peptide. Residues N2 to L7 constitute a propeptide that is removed on maturation. 8 disulfides stabilise this stretch: C18–C77, C33–C124, C35–C50, C37–C54, C49–C105, C56–C98, C66–C91, and C84–C96. F28 provides a ligand contact to N-acetyl-beta-D-glucosamine. Position 30 (D30) interacts with Zn(2+). The Ca(2+) site is built by Y34 and G36. Residues H53 and K69 each coordinate N-acetyl-beta-D-glucosamine. H53 is a catalytic residue. E76 contacts Zn(2+). D99 is a catalytic residue. N117 contributes to the Zn(2+) binding site.

In terms of assembly, heterodimer formed between isoform 5 and isoform 6 in presence of zinc ion and monomer in absence of zinc ion. Ca(2+) is required as a cofactor. In terms of tissue distribution, expressed by the venom gland.

It localises to the secreted. The catalysed reaction is a 1,2-diacyl-sn-glycero-3-phosphocholine + H2O = a 1-acyl-sn-glycero-3-phosphocholine + a fatty acid + H(+). PLA2 catalyzes the calcium-dependent hydrolysis of the 2-acyl groups in 3-sn-phosphoglycerides. The protein is Acidic phospholipase A2 5 of Naja sagittifera (Andaman cobra).